A 295-amino-acid polypeptide reads, in one-letter code: MAGLNVSLSFFFATFALCEAARRASKALLPVGAYEVFAREAMRTLVELGPWAGDFGPDLLLTLLFLLFLAHGVTLDGASANPTVSLQEFLMAEQSLPGTLLKLAAQGLGMQAACTLMRLCWAWELSDLHLLQSLMAQSCSSALRTSVPHGALVEAACAFCFHLTLLHLRHSPPAYSGPAVALLVTVTAYTAGPFTSAFFNPALAASVTFACSGHTLLEYVQVYWLGPLTGMVLAVLLHQGRLPHLFQRNLFYGQKNKYRAPRGKPAPASGDTQTPAKGSSVREPGRSGVEGPHSS.

Residues 1 to 21 form a helical membrane-spanning segment; that stretch reads MAGLNVSLSFFFATFALCEAA. The Extracellular portion of the chain corresponds to 22-54; the sequence is RRASKALLPVGAYEVFAREAMRTLVELGPWAGD. Residues 55–75 traverse the membrane as a helical segment; the sequence is FGPDLLLTLLFLLFLAHGVTL. Topologically, residues 76-99 are cytoplasmic; it reads DGASANPTVSLQEFLMAEQSLPGT. The segment at residues 77-114 is an intramembrane region (discontinuously helical); that stretch reads GASANPTVSLQEFLMAEQSLPGTLLKLAAQGLGMQAAC. Residues 81–83 carry the NPA 1 motif; sequence NPT. The chain crosses the membrane as a helical span at residues 100–126; it reads LLKLAAQGLGMQAACTLMRLCWAWELS. The Extracellular portion of the chain corresponds to 127–145; sequence DLHLLQSLMAQSCSSALRT. A helical membrane pass occupies residues 146 to 166; sequence SVPHGALVEAACAFCFHLTLL. At 167–178 the chain is on the cytoplasmic side; the sequence is HLRHSPPAYSGP. Residues 179-199 traverse the membrane as a helical segment; that stretch reads AVALLVTVTAYTAGPFTSAFF. An intramembrane region (discontinuously helical) is located at residues 195–206; that stretch reads TSAFFNPALAAS. Positions 200–202 match the NPA 2 motif; sequence NPA. The Extracellular segment spans residues 200–215; that stretch reads NPALAASVTFACSGHT. A helical membrane pass occupies residues 216–236; the sequence is LLEYVQVYWLGPLTGMVLAVL. Topologically, residues 237 to 295 are cytoplasmic; that stretch reads LHQGRLPHLFQRNLFYGQKNKYRAPRGKPAPASGDTQTPAKGSSVREPGRSGVEGPHSS. A disordered region spans residues 257 to 295; the sequence is KYRAPRGKPAPASGDTQTPAKGSSVREPGRSGVEGPHSS.

It belongs to the MIP/aquaporin (TC 1.A.8) family. AQP11/AQP12 subfamily. In terms of assembly, homotetramer; each monomer provides an independent water pore. As to expression, restricted to the pancreas.

It localises to the membrane. The enzyme catalyses H2O(in) = H2O(out). In terms of biological role, putative aquaporin. Could form homotetrameric transmembrane channels, with each monomer independently mediating water transport across the plasma membrane along its osmotic gradient. The chain is Putative aquaporin-12A from Homo sapiens (Human).